The following is a 396-amino-acid chain: Chalcone synthase (396 aa).

The active site involves Cys167.

This sequence belongs to the thiolase-like superfamily. Chalcone/stilbene synthases family.

The catalysed reaction is (E)-4-coumaroyl-CoA + 3 malonyl-CoA + 3 H(+) = 2',4,4',6'-tetrahydroxychalcone + 3 CO2 + 4 CoA. The protein operates within secondary metabolite biosynthesis; flavonoid biosynthesis. In terms of biological role, the primary product of this enzyme is 4,2',4',6'-tetrahydroxychalcone (also termed naringenin-chalcone or chalcone) which can under specific conditions spontaneously isomerize into naringenin. The polypeptide is Chalcone synthase (CHS) (Chrysosplenium americanum (American golden saxifrage)).